We begin with the raw amino-acid sequence, 418 residues long: Serine hydroxymethyltransferase (418 aa).

Residues Leu121 and 125 to 127 (GHL) each bind (6S)-5,6,7,8-tetrahydrofolate. Lys230 bears the N6-(pyridoxal phosphate)lysine mark. Residue 355–357 (SPF) coordinates (6S)-5,6,7,8-tetrahydrofolate.

Belongs to the SHMT family. In terms of assembly, homodimer. It depends on pyridoxal 5'-phosphate as a cofactor.

It localises to the cytoplasm. The catalysed reaction is (6R)-5,10-methylene-5,6,7,8-tetrahydrofolate + glycine + H2O = (6S)-5,6,7,8-tetrahydrofolate + L-serine. The protein operates within one-carbon metabolism; tetrahydrofolate interconversion. Its pathway is amino-acid biosynthesis; glycine biosynthesis; glycine from L-serine: step 1/1. Functionally, catalyzes the reversible interconversion of serine and glycine with tetrahydrofolate (THF) serving as the one-carbon carrier. This reaction serves as the major source of one-carbon groups required for the biosynthesis of purines, thymidylate, methionine, and other important biomolecules. Also exhibits THF-independent aldolase activity toward beta-hydroxyamino acids, producing glycine and aldehydes, via a retro-aldol mechanism. This chain is Serine hydroxymethyltransferase, found in Methylococcus capsulatus (strain ATCC 33009 / NCIMB 11132 / Bath).